The following is a 147-amino-acid chain: Small ribosomal subunit protein bS16 (147 aa).

A disordered region spans residues 89–147; the sequence is AWTHGNNPKKAEPGKKAQERAKERADKAEAKAAAAAEAAAAPAEEAPAEAAPAEETSES. A compositionally biased stretch (basic and acidic residues) spans 97 to 118; that stretch reads KKAEPGKKAQERAKERADKAEA. Low complexity predominate over residues 119-147; sequence KAAAAAEAAAAPAEEAPAEAAPAEETSES.

The protein belongs to the bacterial ribosomal protein bS16 family.

In Hyphomonas neptunium (strain ATCC 15444), this protein is Small ribosomal subunit protein bS16.